The following is a 117-amino-acid chain: Prefoldin subunit beta (117 aa).

This sequence belongs to the prefoldin subunit beta family. Heterohexamer of two alpha and four beta subunits.

The protein localises to the cytoplasm. Molecular chaperone capable of stabilizing a range of proteins. Seems to fulfill an ATP-independent, HSP70-like function in archaeal de novo protein folding. This chain is Prefoldin subunit beta (pfdB), found in Pyrococcus horikoshii (strain ATCC 700860 / DSM 12428 / JCM 9974 / NBRC 100139 / OT-3).